Reading from the N-terminus, the 83-residue chain is U-actitoxin-Aeq6a (83 aa).

The signal sequence occupies residues 1-20 (MIYKAVFVCLVLVLLGDVFC). The propeptide occupies 21 to 36 (SPRNSGGGTLNDNPFE). Position 82 is a proline amide (proline 82).

In terms of processing, contains 3 disulfide bonds. In terms of tissue distribution, expressed by acrorhagi.

It is found in the secreted. The protein localises to the nematocyst. In terms of biological role, toxin. This Actinia equina (Beadlet anemone) protein is U-actitoxin-Aeq6a.